The following is a 95-amino-acid chain: Aspartyl/glutamyl-tRNA(Asn/Gln) amidotransferase subunit C (95 aa).

This sequence belongs to the GatC family. In terms of assembly, heterotrimer of A, B and C subunits.

It catalyses the reaction L-glutamyl-tRNA(Gln) + L-glutamine + ATP + H2O = L-glutaminyl-tRNA(Gln) + L-glutamate + ADP + phosphate + H(+). The enzyme catalyses L-aspartyl-tRNA(Asn) + L-glutamine + ATP + H2O = L-asparaginyl-tRNA(Asn) + L-glutamate + ADP + phosphate + 2 H(+). Its function is as follows. Allows the formation of correctly charged Asn-tRNA(Asn) or Gln-tRNA(Gln) through the transamidation of misacylated Asp-tRNA(Asn) or Glu-tRNA(Gln) in organisms which lack either or both of asparaginyl-tRNA or glutaminyl-tRNA synthetases. The reaction takes place in the presence of glutamine and ATP through an activated phospho-Asp-tRNA(Asn) or phospho-Glu-tRNA(Gln). This is Aspartyl/glutamyl-tRNA(Asn/Gln) amidotransferase subunit C from Clostridium botulinum (strain 657 / Type Ba4).